Reading from the N-terminus, the 380-residue chain is Lipid-A-disaccharide synthase (380 aa).

This sequence belongs to the LpxB family.

The catalysed reaction is a lipid X + a UDP-2-N,3-O-bis[(3R)-3-hydroxyacyl]-alpha-D-glucosamine = a lipid A disaccharide + UDP + H(+). The protein operates within bacterial outer membrane biogenesis; LPS lipid A biosynthesis. In terms of biological role, condensation of UDP-2,3-diacylglucosamine and 2,3-diacylglucosamine-1-phosphate to form lipid A disaccharide, a precursor of lipid A, a phosphorylated glycolipid that anchors the lipopolysaccharide to the outer membrane of the cell. In Francisella tularensis subsp. novicida (strain U112), this protein is Lipid-A-disaccharide synthase.